The sequence spans 599 residues: Elongation factor 4 (599 aa).

The 183-residue stretch at 5-187 (SHIRNFSIIA…RLVAVIPPPT (183 aa)) folds into the tr-type G domain. GTP-binding positions include 17 to 22 (DHGKST) and 134 to 137 (NKMD).

This sequence belongs to the TRAFAC class translation factor GTPase superfamily. Classic translation factor GTPase family. LepA subfamily.

Its subcellular location is the cell inner membrane. The enzyme catalyses GTP + H2O = GDP + phosphate + H(+). In terms of biological role, required for accurate and efficient protein synthesis under certain stress conditions. May act as a fidelity factor of the translation reaction, by catalyzing a one-codon backward translocation of tRNAs on improperly translocated ribosomes. Back-translocation proceeds from a post-translocation (POST) complex to a pre-translocation (PRE) complex, thus giving elongation factor G a second chance to translocate the tRNAs correctly. Binds to ribosomes in a GTP-dependent manner. The sequence is that of Elongation factor 4 from Stutzerimonas stutzeri (strain A1501) (Pseudomonas stutzeri).